A 77-amino-acid polypeptide reads, in one-letter code: Protein IDA (77 aa).

Residues 1 to 26 form the signal peptide; that stretch reads MAPCRTMMVLLCFVLFLAASSSCVAA. Residues 56–69 form an RLK5-binding region; the sequence is GVPIPPSAPSKRHN.

In terms of assembly, interaction with RLK5. Expressed specifically in the floral abscission zone.

Its subcellular location is the secreted. The protein resides in the extracellular space. Functionally, involved in an ethylene-independent separation step of floral abscission. Promotes abscission zone (AZ) cells rounding. May act with RLK5 and HSL2 as ligand-receptor pairs. The protein is Protein IDA of Arabidopsis thaliana (Mouse-ear cress).